Here is a 204-residue protein sequence, read N- to C-terminus: FMN-dependent NADH:quinone oxidoreductase 1 (204 aa).

FMN is bound by residues S10 and S15–S17.

It belongs to the azoreductase type 1 family. Homodimer. Requires FMN as cofactor.

The enzyme catalyses 2 a quinone + NADH + H(+) = 2 a 1,4-benzosemiquinone + NAD(+). It carries out the reaction N,N-dimethyl-1,4-phenylenediamine + anthranilate + 2 NAD(+) = 2-(4-dimethylaminophenyl)diazenylbenzoate + 2 NADH + 2 H(+). Functionally, quinone reductase that provides resistance to thiol-specific stress caused by electrophilic quinones. Its function is as follows. Also exhibits azoreductase activity. Catalyzes the reductive cleavage of the azo bond in aromatic azo compounds to the corresponding amines. This Rhizobium etli (strain ATCC 51251 / DSM 11541 / JCM 21823 / NBRC 15573 / CFN 42) protein is FMN-dependent NADH:quinone oxidoreductase 1.